The primary structure comprises 95 residues: uncharacterized protein (95 aa).

Positions 1-12 (MQNFMNNLSGGS) are enriched in low complexity. A disordered region spans residues 1-27 (MQNFMNNLSGGSNKEGGEKSNDFLSSA).

This is an uncharacterized protein from Schizosaccharomyces pombe (strain 972 / ATCC 24843) (Fission yeast).